Consider the following 208-residue polypeptide: Protein DEHYDRATION-INDUCED 19 homolog 6 (208 aa).

Residues Val-151–Glu-190 form a disordered region. Basic and acidic residues-rich tracts occupy residues Ser-153 to Gly-163 and Asp-170 to Glu-190.

The protein belongs to the Di19 family.

The sequence is that of Protein DEHYDRATION-INDUCED 19 homolog 6 (DI19-6) from Oryza sativa subsp. japonica (Rice).